Consider the following 1210-residue polypeptide: V-type proton ATPase 116 kDa subunit a 4 (1210 aa).

Residues 1 to 715 (MSSFSNVGFV…YTIITFPFLF (715 aa)) are Cytoplasmic-facing. The span at 259–271 (SSKISFTSSSPSP) shows a compositional bias: low complexity. A disordered region spans residues 259–292 (SSKISFTSSSPSPQRNPKNEAQKNSSSKREETSM). The segment covering 275–291 (PKNEAQKNSSSKREETS) has biased composition (basic and acidic residues). The stretch at 339-405 (FVKQMRRCEE…EREFLDLNNN (67 aa)) forms a coiled coil. A helical membrane pass occupies residues 716–736 (AVMFGDAAHGAILLLAALFFI). The Extracellular segment spans residues 737-760 (RNERKIESKKIRDEIFNTFYGGRY). The chain crosses the membrane as a helical span at residues 761-781 (IMMLMGIFSIYTGFLYNDAFA). The Cytoplasmic portion of the chain corresponds to 782–855 (KSFNVFGSGW…SFLNSMKMKA (74 aa)). Residues 856-876 (SVIIGITQMTFGVFLSVLNHI) traverse the membrane as a helical segment. Topologically, residues 877–892 (HFKSYIDIISNFIPQV) are extracellular. The helical transmembrane segment at 893 to 913 (IFLSCIFIYLCIQIIVKWIFF) threads the bilayer. The Cytoplasmic segment spans residues 914-976 (SVNAENVFGF…WYPNQRLVET (63 aa)). Residues 977–997 (ILISISLACIPIMLFGKPLWV) form a helical membrane-spanning segment. The Extracellular segment spans residues 998 to 1127 (RFVTSKRHKL…NETIAMCLKP (130 aa)). N-linked (GlcNAc...) asparagine glycans are attached at residues Asn-1010, Asn-1019, and Asn-1118. A helical membrane pass occupies residues 1128–1148 (VVACVAFFIFASLSLSILIMM). Topologically, residues 1149-1210 (EGLSAFLHAL…DISSGQHLHI (62 aa)) are cytoplasmic.

The protein belongs to the V-ATPase 116 kDa subunit family. V-ATPase is a heteromultimeric enzyme made up of two complexes: the ATP-hydrolytic V1 complex and the proton translocation V0 complex. The V1 complex consists of three catalytic AB heterodimers that form a heterohexamer, three peripheral stalks each consisting of EG heterodimers, one central rotor including subunits D and F, and the regulatory subunits C and H. The proton translocation complex V0 consists of the proton transport subunit a, a ring of proteolipid subunits c9c'', rotary subunit d, subunits e and f, and the accessory subunits vah-19/Ac45 and vah-20/PRR. As to expression, expressed in uterus.

The protein localises to the membrane. Functionally, subunit of the V0 complex of vacuolar(H+)-ATPase (V-ATPase), a multisubunit enzyme composed of a peripheral complex (V1) that hydrolyzes ATP and a membrane integral complex (V0) that translocates protons. V-ATPase is responsible for acidifying and maintaining the pH of intracellular compartments and in some cell types, is targeted to the plasma membrane, where it is responsible for acidifying the extracellular environment. This chain is V-type proton ATPase 116 kDa subunit a 4, found in Caenorhabditis elegans.